A 92-amino-acid polypeptide reads, in one-letter code: Small ribosomal subunit protein uS19 (92 aa).

The protein belongs to the universal ribosomal protein uS19 family.

In terms of biological role, protein S19 forms a complex with S13 that binds strongly to the 16S ribosomal RNA. This is Small ribosomal subunit protein uS19 from Allorhizobium ampelinum (strain ATCC BAA-846 / DSM 112012 / S4) (Agrobacterium vitis (strain S4)).